A 136-amino-acid polypeptide reads, in one-letter code: Nucleoside diphosphate kinase (136 aa).

Residues Lys-10, Phe-58, Arg-86, Thr-92, Arg-104, and Asn-114 each coordinate ATP. His-117 functions as the Pros-phosphohistidine intermediate in the catalytic mechanism.

It belongs to the NDK family. Homotetramer. It depends on Mg(2+) as a cofactor.

It is found in the cytoplasm. The enzyme catalyses a 2'-deoxyribonucleoside 5'-diphosphate + ATP = a 2'-deoxyribonucleoside 5'-triphosphate + ADP. It carries out the reaction a ribonucleoside 5'-diphosphate + ATP = a ribonucleoside 5'-triphosphate + ADP. Major role in the synthesis of nucleoside triphosphates other than ATP. The ATP gamma phosphate is transferred to the NDP beta phosphate via a ping-pong mechanism, using a phosphorylated active-site intermediate. The chain is Nucleoside diphosphate kinase from Mycolicibacterium vanbaalenii (strain DSM 7251 / JCM 13017 / BCRC 16820 / KCTC 9966 / NRRL B-24157 / PYR-1) (Mycobacterium vanbaalenii).